We begin with the raw amino-acid sequence, 326 residues long: Beta-ketoacyl-[acyl-carrier-protein] synthase III (326 aa).

Catalysis depends on residues Cys-112 and His-251. Residues 252–256 (QANSR) are ACP-binding. Residue Asn-281 is part of the active site.

This sequence belongs to the thiolase-like superfamily. FabH family. In terms of assembly, homodimer.

Its subcellular location is the cytoplasm. The enzyme catalyses malonyl-[ACP] + acetyl-CoA + H(+) = 3-oxobutanoyl-[ACP] + CO2 + CoA. Its pathway is lipid metabolism; fatty acid biosynthesis. Its function is as follows. Catalyzes the condensation reaction of fatty acid synthesis by the addition to an acyl acceptor of two carbons from malonyl-ACP. Catalyzes the first condensation reaction which initiates fatty acid synthesis and may therefore play a role in governing the total rate of fatty acid production. Possesses both acetoacetyl-ACP synthase and acetyl transacylase activities. Its substrate specificity determines the biosynthesis of branched-chain and/or straight-chain of fatty acids. This is Beta-ketoacyl-[acyl-carrier-protein] synthase III from Clostridium botulinum (strain Loch Maree / Type A3).